Reading from the N-terminus, the 247-residue chain is Dihydroorotate dehydrogenase B (NAD(+)), electron transfer subunit (247 aa).

The region spanning 2–96 (RWKMKARVLS…TGPHGNGFEI (95 aa)) is the FAD-binding FR-type domain. FAD is bound by residues 49 to 52 (RPFS), 64 to 66 (LYQ), and 71 to 72 (GT). 4 residues coordinate [2Fe-2S] cluster: Cys210, Cys215, Cys218, and Cys234.

The protein belongs to the PyrK family. As to quaternary structure, heterotetramer of 2 PyrK and 2 PyrD type B subunits. Requires [2Fe-2S] cluster as cofactor. The cofactor is FAD.

It participates in pyrimidine metabolism; UMP biosynthesis via de novo pathway; orotate from (S)-dihydroorotate (NAD(+) route): step 1/1. Its function is as follows. Responsible for channeling the electrons from the oxidation of dihydroorotate from the FMN redox center in the PyrD type B subunit to the ultimate electron acceptor NAD(+). The chain is Dihydroorotate dehydrogenase B (NAD(+)), electron transfer subunit from Caldanaerobacter subterraneus subsp. tengcongensis (strain DSM 15242 / JCM 11007 / NBRC 100824 / MB4) (Thermoanaerobacter tengcongensis).